A 424-amino-acid chain; its full sequence is STAM-binding protein (424 aa).

Positions 1–127 are interaction with CHMP3; it reads MSDHGDVSLP…YTEYNEEKKK (127 aa). Ser-2 and Ser-48 each carry phosphoserine. The segment at 227–231 is interaction with STAM; the sequence is PAKPP. Phosphoserine is present on residues Ser-243, Ser-245, and Ser-247. In terms of domain architecture, MPN spans 257-388; the sequence is VVVPGRLCPQ…LTDHGLEEIS (132 aa). The Zn(2+) site is built by His-335, His-337, Asp-348, His-350, Cys-390, His-396, and His-398. Residues 335-348 carry the JAMM motif motif; that stretch reads HTHPTQTAFLSSVD.

This sequence belongs to the peptidase M67C family. Interacts with STAM. Interacts with SMAD6 and SMAD7. Interacts with CHMP3; the interaction appears to relieve the autoinhibition of CHMP3. Interacts with SMURF2 and RNF11; this interaction promotes ubiquitination. The cofactor is Zn(2+). Post-translationally, phosphorylated after BMP type I receptor activation. Ubiquitinated by SMURF2 in the presence of RNF11. In terms of tissue distribution, ubiquitously expressed.

The protein resides in the nucleus. Its subcellular location is the membrane. It is found in the cytoplasm. The protein localises to the early endosome. Inhibited by N-ethylmaleimide. Strongly and specifically inhibited by ubiquitin variants UbV(SP.2) and UbV(SP.3). Also inhibited by UbV(SP.1); an ubiquitin variant that also inhibits STAMBPL1. Zinc metalloprotease that specifically cleaves 'Lys-63'-linked polyubiquitin chains. Does not cleave 'Lys-48'-linked polyubiquitin chains. Plays a role in signal transduction for cell growth and MYC induction mediated by IL-2 and GM-CSF. Potentiates BMP (bone morphogenetic protein) signaling by antagonizing the inhibitory action of SMAD6 and SMAD7. Has a key role in regulation of cell surface receptor-mediated endocytosis and ubiquitin-dependent sorting of receptors to lysosomes. Endosomal localization of STAMBP is required for efficient EGFR degradation but not for its internalization. Involved in the negative regulation of PI3K-AKT-mTOR and RAS-MAP signaling pathways. The protein is STAM-binding protein (STAMBP) of Homo sapiens (Human).